Consider the following 475-residue polypeptide: Probable GABA permease (475 aa).

A run of 12 helical transmembrane segments spans residues 27–47 (VTML…SGHA), 48–68 (IAAA…LVVL), 105–125 (LYWW…AAIL), 127–147 (AWFP…LLTV), 163–183 (FALL…VAIV), 211–231 (AVLG…IVTI), 250–270 (VIWR…SIVP), 296–316 (LIVD…AIYT), 345–365 (PAVL…YFAP), 368–388 (VFTF…LVIA), 413–433 (PWLT…MLIM), and 438–458 (HEVF…LLNA).

Belongs to the amino acid-polyamine-organocation (APC) superfamily. Amino acid transporter (AAT) (TC 2.A.3.1) family.

The protein resides in the membrane. Functionally, involved in the degradation of beta-alanine. The polypeptide is Probable GABA permease (bauD) (Pseudomonas aeruginosa (strain ATCC 15692 / DSM 22644 / CIP 104116 / JCM 14847 / LMG 12228 / 1C / PRS 101 / PAO1)).